We begin with the raw amino-acid sequence, 33 residues long: Imperacalcin (33 aa).

3 cysteine pairs are disulfide-bonded: C3–C17, C10–C21, and C16–C32. Important for stimulation of [3H]ryanodine binding to RYR1 stretches follow at residues 8-9 (KR) and 19-20 (KK). The segment at 22–24 (KRR) is essential for stimulation of [3H]ryanodine binding to RYR1. The interval 25-27 (GTN) is important for stimulation of [3H]ryanodine binding to RYR1.

This sequence belongs to the scorpion calcin family. In terms of tissue distribution, expressed by the venom gland.

The protein resides in the secreted. This toxin affects the activity of ryanodine receptors 1, 2 and 3 (RyR1, RyR2 and RyR3). At lower concentrations the toxin increases full openings of the RyRs, and at higher concentrations it inhibits full openings and induces openings to subconductance levels (30% of the full conductance state) and reduces the number of full conductance openings. The different actions may be attributed to the toxins binding at different sites on the RyRs, with binding at a high-affinity site mediating the increase in full openings and the induction of subconductance states evoked upon binding to a lower-affinity site. Furthermore, it triggers calcium release from sarcoplasmic vesicles (11.7 nM are enough to induce a sharp release, and 70% of the total calcium is released after toxin (100 nM) addition) probably by acting as a cell-penetrating peptide (CPP). In addition, it has been shown to dose-dependently stimulate ryanodine binding to RyR1 (EC(50)=8.7 nM). It also augments the bell-shaped calcium-[3H]ryanodine binding curve that is maximal at about 10 uM calcium concentration. It binds a different site as ryanodine. It acts synergistically with caffeine. In vivo, intracerebroventricular injection into mice induces neurotoxic symptoms, followed by death. The sequence is that of Imperacalcin from Pandinus imperator (Emperor scorpion).